The primary structure comprises 407 residues: Type II secretion system protein L (407 aa).

Residues 1–257 (MEGSVSEFLT…WLRYWQIWRK (257 aa)) are Cytoplasmic-facing. A helical membrane pass occupies residues 258–275 (VAIAAGLFVAVSISYSLF). Residues 276–407 (QAHQYEAQAD…VFGVFVVKPK (132 aa)) are Periplasmic-facing.

This sequence belongs to the GSP L family. As to quaternary structure, type II secretion system is composed of four main components: the outer membrane complex, the inner membrane complex, the cytoplasmic secretion ATPase and the periplasm-spanning pseudopilus. Forms homodimers. Interacts with EpsM/GspM. Interacts with EpsE/GspE and EpsF/GspF.

It localises to the cell inner membrane. In terms of biological role, inner membrane component of the type II secretion system required for the energy-dependent secretion of extracellular factors such as proteases and toxins from the periplasm. Plays a role in the complex assembly and recruits EpsM resulting in a stable complex in the inner membrane. Provides thus a link between the energy-providing EpsE protein in the cytoplasm and the rest of the T2SS machinery. This Vibrio cholerae serotype O1 (strain ATCC 39315 / El Tor Inaba N16961) protein is Type II secretion system protein L (epsL).